A 395-amino-acid polypeptide reads, in one-letter code: Chaperone protein DnaJ 1 (395 aa).

A J domain is found at 10 to 75 (DFYQELGVSS…AKRKEYDETR (66 aa)). The segment at 164–242 (GVAMPLRLTS…CKGTGVTTRT (79 aa)) adopts a CR-type zinc-finger fold. Cys-177, Cys-180, Cys-194, Cys-197, Cys-216, Cys-219, Cys-230, and Cys-233 together coordinate Zn(2+). CXXCXGXG motif repeat units follow at residues 177–184 (CTNCHGSG), 194–201 (CPTCNGSG), 216–223 (CTDCRGSG), and 230–237 (CEECKGTG).

The protein belongs to the DnaJ family. In terms of assembly, homodimer. It depends on Zn(2+) as a cofactor.

Its subcellular location is the cytoplasm. In terms of biological role, participates actively in the response to hyperosmotic and heat shock by preventing the aggregation of stress-denatured proteins and by disaggregating proteins, also in an autonomous, DnaK-independent fashion. Unfolded proteins bind initially to DnaJ; upon interaction with the DnaJ-bound protein, DnaK hydrolyzes its bound ATP, resulting in the formation of a stable complex. GrpE releases ADP from DnaK; ATP binding to DnaK triggers the release of the substrate protein, thus completing the reaction cycle. Several rounds of ATP-dependent interactions between DnaJ, DnaK and GrpE are required for fully efficient folding. Also involved, together with DnaK and GrpE, in the DNA replication of plasmids through activation of initiation proteins. The sequence is that of Chaperone protein DnaJ 1 from Mycobacterium bovis (strain ATCC BAA-935 / AF2122/97).